We begin with the raw amino-acid sequence, 294 residues long: Acetylglutamate kinase (294 aa).

Residues 63–64 (GG), Arg85, and Asn188 contribute to the substrate site.

This sequence belongs to the acetylglutamate kinase family. ArgB subfamily.

It localises to the cytoplasm. The catalysed reaction is N-acetyl-L-glutamate + ATP = N-acetyl-L-glutamyl 5-phosphate + ADP. It functions in the pathway amino-acid biosynthesis; L-arginine biosynthesis; N(2)-acetyl-L-ornithine from L-glutamate: step 2/4. Functionally, catalyzes the ATP-dependent phosphorylation of N-acetyl-L-glutamate. This is Acetylglutamate kinase from Methanococcus vannielii (strain ATCC 35089 / DSM 1224 / JCM 13029 / OCM 148 / SB).